The following is a 225-amino-acid chain: Receptor-transporting protein 2 (225 aa).

Over 1 to 196 (MCTSLTTCEW…RAQAGSGYNF (196 aa)) the chain is Cytoplasmic. Residues 52–161 (ASGRFHCSWC…AEFCEACQEG (110 aa)) form a 3CxxC-type zinc finger. The helical transmembrane segment at 197-219 (LSLRWCLFWASLCLLVVYLQFSF) threads the bilayer. The Extracellular portion of the chain corresponds to 220-225 (LSPAFF).

The protein belongs to the TMEM7 family. As to quaternary structure, interacts with olfactory receptors. Expressed in circumvallate papillae and testis.

Its subcellular location is the cell membrane. In terms of biological role, specifically promotes functional cell surface expression of olfactory receptors, but not of other GPCRs. This chain is Receptor-transporting protein 2 (RTP2), found in Homo sapiens (Human).